The sequence spans 216 residues: Ras-related protein RABE1a (216 aa).

22-29 (GDSGVGKS) is a binding site for GTP. Positions 44-52 (FITTIGIDF) match the Effector region motif. GTP-binding positions include 70–74 (DTAGQ), 128–131 (NKAD), and 159–160 (SA). The disordered stretch occupies residues 185-216 (DARAEPQTIKINQSDQGAGTSQATQKSACCGT). Over residues 193-216 (IKINQSDQGAGTSQATQKSACCGT) the composition is skewed to polar residues. 2 S-geranylgeranyl cysteine lipidation sites follow: cysteine 213 and cysteine 214.

This sequence belongs to the small GTPase superfamily. Rab family. In terms of assembly, interacts with PI5K2.

The protein localises to the golgi apparatus membrane. It localises to the cell membrane. Involved in membrane trafficking from the Golgi to the plasma membrane. The sequence is that of Ras-related protein RABE1a (RABE1A) from Arabidopsis thaliana (Mouse-ear cress).